We begin with the raw amino-acid sequence, 555 residues long: 2-succinyl-5-enolpyruvyl-6-hydroxy-3-cyclohexene-1-carboxylate synthase (555 aa).

Belongs to the TPP enzyme family. MenD subfamily. Homodimer. Mg(2+) serves as cofactor. The cofactor is Mn(2+). Thiamine diphosphate is required as a cofactor.

The enzyme catalyses isochorismate + 2-oxoglutarate + H(+) = 5-enolpyruvoyl-6-hydroxy-2-succinyl-cyclohex-3-ene-1-carboxylate + CO2. Its pathway is quinol/quinone metabolism; 1,4-dihydroxy-2-naphthoate biosynthesis; 1,4-dihydroxy-2-naphthoate from chorismate: step 2/7. It functions in the pathway quinol/quinone metabolism; menaquinone biosynthesis. Its function is as follows. Catalyzes the thiamine diphosphate-dependent decarboxylation of 2-oxoglutarate and the subsequent addition of the resulting succinic semialdehyde-thiamine pyrophosphate anion to isochorismate to yield 2-succinyl-5-enolpyruvyl-6-hydroxy-3-cyclohexene-1-carboxylate (SEPHCHC). This is 2-succinyl-5-enolpyruvyl-6-hydroxy-3-cyclohexene-1-carboxylate synthase from Kineococcus radiotolerans (strain ATCC BAA-149 / DSM 14245 / SRS30216).